The sequence spans 131 residues: MASLKEIIDELGKQAKEQNKIASRILKIKGIKRIVVQLNAVPQDGKIRYSLTIHSQNNFRKQIGITPQDAEDLKLIAEFLEKYSDFLNEYVKFTPRNNNAIQEEEIDMEQQEEKEEKPREKGKKKSVEEEF.

The disordered stretch occupies residues 99–131; that stretch reads NAIQEEEIDMEQQEEKEEKPREKGKKKSVEEEF. Positions 102 to 113 are enriched in acidic residues; that stretch reads QEEEIDMEQQEE. Over residues 114–131 the composition is skewed to basic and acidic residues; the sequence is KEEKPREKGKKKSVEEEF.

This is an uncharacterized protein from Sulfolobus islandicus rod-shaped virus 1 (SIRV-1).